The following is a 252-amino-acid chain: Imidazole glycerol phosphate synthase subunit HisF (252 aa).

Residues aspartate 11 and aspartate 130 contribute to the active site.

It belongs to the HisA/HisF family. As to quaternary structure, heterodimer of HisH and HisF.

It localises to the cytoplasm. The enzyme catalyses 5-[(5-phospho-1-deoxy-D-ribulos-1-ylimino)methylamino]-1-(5-phospho-beta-D-ribosyl)imidazole-4-carboxamide + L-glutamine = D-erythro-1-(imidazol-4-yl)glycerol 3-phosphate + 5-amino-1-(5-phospho-beta-D-ribosyl)imidazole-4-carboxamide + L-glutamate + H(+). It participates in amino-acid biosynthesis; L-histidine biosynthesis; L-histidine from 5-phospho-alpha-D-ribose 1-diphosphate: step 5/9. Functionally, IGPS catalyzes the conversion of PRFAR and glutamine to IGP, AICAR and glutamate. The HisF subunit catalyzes the cyclization activity that produces IGP and AICAR from PRFAR using the ammonia provided by the HisH subunit. The chain is Imidazole glycerol phosphate synthase subunit HisF from Acinetobacter baylyi (strain ATCC 33305 / BD413 / ADP1).